The sequence spans 133 residues: Cytochrome c-554 (133 aa).

A Pyrrolidone carboxylic acid modification is found at glutamine 1. Heme c contacts are provided by methionine 17, cysteine 122, cysteine 125, and histidine 126.

Post-translationally, binds 1 heme c group covalently per subunit.

The protein localises to the periplasm. In terms of biological role, monoheme c-type cytochrome, that is particularly expressed when cells generate energy via aerobic respiration. The protein is Cytochrome c-554 (cycF) of Cereibacter sphaeroides (Rhodobacter sphaeroides).